Here is a 392-residue protein sequence, read N- to C-terminus: Carbamoyl phosphate synthase small chain (392 aa).

Positions M1–D174 are CPSase. 3 residues coordinate L-glutamine: S47, G224, and G226. Residues S176–R392 enclose the Glutamine amidotransferase type-1 domain. C252 functions as the Nucleophile in the catalytic mechanism. L-glutamine is bound by residues L253, Q256, N294, G296, and F297. Active-site residues include H367 and E369.

The protein belongs to the CarA family. As to quaternary structure, composed of two chains; the small (or glutamine) chain promotes the hydrolysis of glutamine to ammonia, which is used by the large (or ammonia) chain to synthesize carbamoyl phosphate. Tetramer of heterodimers (alpha,beta)4.

The catalysed reaction is hydrogencarbonate + L-glutamine + 2 ATP + H2O = carbamoyl phosphate + L-glutamate + 2 ADP + phosphate + 2 H(+). It carries out the reaction L-glutamine + H2O = L-glutamate + NH4(+). Its pathway is amino-acid biosynthesis; L-arginine biosynthesis; carbamoyl phosphate from bicarbonate: step 1/1. The protein operates within pyrimidine metabolism; UMP biosynthesis via de novo pathway; (S)-dihydroorotate from bicarbonate: step 1/3. Its function is as follows. Small subunit of the glutamine-dependent carbamoyl phosphate synthetase (CPSase). CPSase catalyzes the formation of carbamoyl phosphate from the ammonia moiety of glutamine, carbonate, and phosphate donated by ATP, constituting the first step of 2 biosynthetic pathways, one leading to arginine and/or urea and the other to pyrimidine nucleotides. The small subunit (glutamine amidotransferase) binds and cleaves glutamine to supply the large subunit with the substrate ammonia. The chain is Carbamoyl phosphate synthase small chain from Thermotoga maritima (strain ATCC 43589 / DSM 3109 / JCM 10099 / NBRC 100826 / MSB8).